Consider the following 194-residue polypeptide: uncharacterized protein (194 aa).

This is an uncharacterized protein from Escherichia coli (strain K12).